We begin with the raw amino-acid sequence, 108 residues long: UPF0102 protein Tpet_0671 (108 aa).

It belongs to the UPF0102 family.

The protein is UPF0102 protein Tpet_0671 of Thermotoga petrophila (strain ATCC BAA-488 / DSM 13995 / JCM 10881 / RKU-1).